The following is a 349-amino-acid chain: 4-hydroxythreonine-4-phosphate dehydrogenase (349 aa).

Thr-135 contacts substrate. A divalent metal cation contacts are provided by His-170, His-215, and His-276. Residues Lys-284, Asn-293, and Arg-302 each contribute to the substrate site.

The protein belongs to the PdxA family. In terms of assembly, homodimer. Requires a divalent metal cation as cofactor.

It is found in the cytoplasm. It carries out the reaction 4-(phosphooxy)-L-threonine + NAD(+) = 3-amino-2-oxopropyl phosphate + CO2 + NADH. It functions in the pathway cofactor biosynthesis; pyridoxine 5'-phosphate biosynthesis; pyridoxine 5'-phosphate from D-erythrose 4-phosphate: step 4/5. Catalyzes the NAD(P)-dependent oxidation of 4-(phosphooxy)-L-threonine (HTP) into 2-amino-3-oxo-4-(phosphooxy)butyric acid which spontaneously decarboxylates to form 3-amino-2-oxopropyl phosphate (AHAP). The protein is 4-hydroxythreonine-4-phosphate dehydrogenase of Synechococcus sp. (strain JA-3-3Ab) (Cyanobacteria bacterium Yellowstone A-Prime).